The primary structure comprises 575 residues: Phosphoenolpyruvate-protein phosphotransferase (575 aa).

His-189 acts as the Tele-phosphohistidine intermediate in catalysis. Arg-296 and Arg-332 together coordinate phosphoenolpyruvate. Mg(2+) contacts are provided by Glu-431 and Asp-455. Phosphoenolpyruvate is bound by residues 454–455 and Arg-465; that span reads ND. The active-site Proton donor is Cys-502.

It belongs to the PEP-utilizing enzyme family. As to quaternary structure, homodimer. It depends on Mg(2+) as a cofactor.

The protein resides in the cytoplasm. The catalysed reaction is L-histidyl-[protein] + phosphoenolpyruvate = N(pros)-phospho-L-histidyl-[protein] + pyruvate. Functionally, general (non sugar-specific) component of the phosphoenolpyruvate-dependent sugar phosphotransferase system (sugar PTS). This major carbohydrate active-transport system catalyzes the phosphorylation of incoming sugar substrates concomitantly with their translocation across the cell membrane. Enzyme I transfers the phosphoryl group from phosphoenolpyruvate (PEP) to the phosphoryl carrier protein (HPr). This is Phosphoenolpyruvate-protein phosphotransferase (ptsI) from Haemophilus influenzae (strain ATCC 51907 / DSM 11121 / KW20 / Rd).